The chain runs to 210 residues: SAP domain-containing ribonucleoprotein (210 aa).

An N-acetylalanine modification is found at Ala-2. An SAP domain is found at 8–42 (LHKLKLAELKQECLARGLETKGIKQDLIHRLQAYL). At Lys-10 the chain carries N6-acetyllysine. The span at 45-64 (HAEEEANEEDVLGDETEEEE) shows a compositional bias: acidic residues. A disordered region spans residues 45–86 (HAEEEANEEDVLGDETEEEETKPIELPVKEEEPPEKTVDVAA). The segment covering 65–86 (TKPIELPVKEEEPPEKTVDVAA) has biased composition (basic and acidic residues). At Lys-142 the chain carries N6-acetyllysine. The disordered stretch occupies residues 161–210 (VSSISRKSEDDEKLKKRKERFGIVTSSAGTGTTEDTEAKKRKRAERFGIA). Position 163 is a phosphoserine (Ser-163). Residues 184–193 (VTSSAGTGTT) are compositionally biased toward polar residues.

This sequence belongs to the SAP domain-containing ribonucleoprotein family. Interacts with DDX39A. Interacts with FUS. Interacts (via the C-terminal domain) with DDX39B; the interaction is direct and facilitates RNA binding of DDX39B. Component of the transcription/export (TREX) complex at least composed of ALYREF/THOC4, DDX39B, SARNP/CIP29, CHTOP and the THO subcomplex; TREX seems to have dynamic structure involving ATP-dependent remodeling; in the complex interacts directly with DDX39B in a ATP-dependent manner which bridges it to ALYREF/THOC4. As to expression, low expression in spleen, liver, pancreas, testis, thymus, heart, and kidney. Increased levels are seen in hepatocellular carcinoma and pancreatic adenocarcinoma.

The protein resides in the nucleus. It localises to the nucleus speckle. Functionally, binds both single-stranded and double-stranded DNA with higher affinity for the single-stranded form. Specifically binds to scaffold/matrix attachment region DNA. Also binds single-stranded RNA. Enhances RNA unwinding activity of DDX39A. May participate in important transcriptional or translational control of cell growth, metabolism and carcinogenesis. Component of the TREX complex which is thought to couple mRNA transcription, processing and nuclear export, and specifically associates with spliced mRNA and not with unspliced pre-mRNA. The TREX complex is recruited to spliced mRNAs by a transcription-independent mechanism, binds to mRNA upstream of the exon-junction complex (EJC) and is recruited in a splicing- and cap-dependent manner to a region near the 5' end of the mRNA where it functions in mRNA export to the cytoplasm via the TAP/NXF1 pathway. Associates with DDX39B, which facilitates RNA binding of DDX39B and likely plays a role in mRNA export. This is SAP domain-containing ribonucleoprotein (SARNP) from Homo sapiens (Human).